A 273-amino-acid chain; its full sequence is 2-dehydro-3-deoxyphosphooctonate aldolase (273 aa).

Belongs to the KdsA family.

Its subcellular location is the cytoplasm. It carries out the reaction D-arabinose 5-phosphate + phosphoenolpyruvate + H2O = 3-deoxy-alpha-D-manno-2-octulosonate-8-phosphate + phosphate. It functions in the pathway carbohydrate biosynthesis; 3-deoxy-D-manno-octulosonate biosynthesis; 3-deoxy-D-manno-octulosonate from D-ribulose 5-phosphate: step 2/3. Its pathway is bacterial outer membrane biogenesis; lipopolysaccharide biosynthesis. The sequence is that of 2-dehydro-3-deoxyphosphooctonate aldolase from Citrifermentans bemidjiense (strain ATCC BAA-1014 / DSM 16622 / JCM 12645 / Bem) (Geobacter bemidjiensis).